Here is a 157-residue protein sequence, read N- to C-terminus: Large ribosomal subunit protein uL22 (157 aa).

This sequence belongs to the universal ribosomal protein uL22 family. Part of the 50S ribosomal subunit.

In terms of biological role, this protein binds specifically to 23S rRNA. It makes multiple contacts with different domains of the 23S rRNA in the assembled 50S subunit and ribosome. The globular domain of the protein is located near the polypeptide exit tunnel on the outside of the subunit, while an extended beta-hairpin is found that lines the wall of the exit tunnel in the center of the 70S ribosome. This Staphylothermus marinus (strain ATCC 43588 / DSM 3639 / JCM 9404 / F1) protein is Large ribosomal subunit protein uL22.